We begin with the raw amino-acid sequence, 283 residues long: Isochorismatase domain-containing protein 1 (283 aa).

The protein belongs to the isochorismatase family.

The sequence is that of Isochorismatase domain-containing protein 1 (isoc1) from Danio rerio (Zebrafish).